A 411-amino-acid polypeptide reads, in one-letter code: Potassium channel subfamily K member 3 (411 aa).

The Cytoplasmic portion of the chain corresponds to 1–8 (MKRQNVRT). Residues 9-29 (LALIVCTFTYLLVGAAVFDAL) form a helical membrane-spanning segment. N-linked (GlcNAc...) asparagine glycosylation occurs at N53. Positions 78-101 (WRFAGSFYFAITVITTIGYGHAAP) form an intramembrane region, pore-forming. The chain crosses the membrane as a helical span at residues 108-128 (VFCMFYALLGIPLTLVMFQSL). Over 129 to 158 (GERINTFVRYLLHRAKRGLGMRHAEVSMAN) the chain is Cytoplasmic. A helical membrane pass occupies residues 159–179 (MVLIGFVSCISTLCIGAAAFS). The pore-forming intramembrane region spans 184-207 (WTFFQAYYYCFITLTTIGFGDYVA). Residues 223 to 243 (FSFVYILTGLTVIGAFLNLVV) form a helical membrane-spanning segment. Topologically, residues 244 to 411 (LRFMTMNAED…RGLMKRRSSV (168 aa)) are cytoplasmic.

This sequence belongs to the two pore domain potassium channel (TC 1.A.1.8) family. In terms of assembly, homodimer. Heterodimer with KCNK1. Heterodimer with KCNK9. Strongest expression in heart. Moderate expression in lung and brain. Low levels in liver, kidney and skeletal muscle. Expressed in cerebellar granule cells (at protein level).

Its subcellular location is the cell membrane. It catalyses the reaction K(+)(in) = K(+)(out). It carries out the reaction Na(+)(in) = Na(+)(out). With respect to regulation, inhibited by extracellular acidification, muscarinic signaling, divalent metal cations Zn(2+) and Ba(2+), isoflurane, bupivacaine and phenytoin. Activated by protein kinase A. Ruthenium red resistant. In terms of biological role, k(+) channel that conducts voltage-dependent outward rectifying currents upon membrane depolarization. Voltage sensing is coupled to K(+) electrochemical gradient in an 'ion flux gating' mode where outward but not inward ion flow opens the gate. Changes ion selectivity and becomes permeable to Na(+) ions in response to extracellular acidification. Protonation of the pH sensor His-98 stabilizes C-type inactivation conformation likely converting the channel from outward K(+)-conducting, to inward Na(+)-conducting to nonconductive state. Homo- and heterodimerizes to form functional channels with distinct regulatory and gating properties. Allows K(+) currents with fast-gating kinetics important for the repolarization and hyperpolarization phases of action potentials. In cerebellar granule cells, heteromeric KCNK3:KCNK9 channel may hyperpolarize the resting membrane potential to limit intrinsic neuronal excitability, but once the action potential threshold is reached, it may support high-frequency action potential firing and increased neuronal excitability. Dispensable for central chemosensory respiration i.e. breathing controlled by brainstem CO2/pH, it rather conducts pH-sensitive currents and controls the firing rate of serotonergic raphe neurons involved in potentiation of the respiratory chemoreflex. Additionally, imparts chemosensitivity to type 1 cells in carotid bodies which respond to a decrease in arterial oxygen pressure or an increase in carbon dioxide pressure or pH to initiate adaptive changes in pulmonary ventilation. In adrenal gland, contributes to the maintenance of a hyperpolarized resting membrane potential of aldosterone-producing cells at zona glomerulosa and limits aldosterone release as part of a regulatory mechanism that controls arterial blood pressure and electrolyte homeostasis. In brown adipocytes, mediates K(+) efflux that counteracts norepinephrine-induced membrane depolarization, limits Ca(2+) efflux and downstream cAMP and PKA signaling, ultimately attenuating lipid oxidation and adaptive thermogenesis. This chain is Potassium channel subfamily K member 3, found in Rattus norvegicus (Rat).